The sequence spans 129 residues: MRKIYATGKRKTAIAKVWLTPGKGELSINEQSLNQWLGGHEAIKMKVMQPLLLTKQEQSVDIKAVVFGGGYSAQAEALRHGISKALNAYDIAFRAVLKPKGLLTRDSRVVERKKYGKRKARRSPQFSKR.

Belongs to the universal ribosomal protein uS9 family.

The sequence is that of Small ribosomal subunit protein uS9 from Helicobacter pylori (strain Shi470).